Consider the following 75-residue polypeptide: MARVCQVTGKRPMSGNKRSHAMNATKRWFAPNIHSHRFWVASKKRFVALRLSTKGIRLIDKFGIEYFFTKIYPKK.

The segment at 1 to 21 (MARVCQVTGKRPMSGNKRSHA) is disordered.

The protein belongs to the bacterial ribosomal protein bL28 family.

The protein is Large ribosomal subunit protein bL28 of Blochmanniella pennsylvanica (strain BPEN).